We begin with the raw amino-acid sequence, 277 residues long: MKKQRAFLKWAGGKYSLVEDIQRHLPEARELVEPFVGAGSVFLNTDFERYLLADINPDLINFYNLLKTEPQAYIHEAKRWFVPENNRKEVYLDIRKQFNQSDDAMFRSLAFLYMNRFGFNGLCRYNKKGGFNVPFGSYKKPYFPEQELEFFAEKAQRATFICASYGETFARAQSDSVIYCDPPYAPLSTTANFTSYAGNGFTLDDQAALADIAEKTAKERGISVLISNHDTTHTRRLYRGAQLNVVKANRTISRNGAGRNKVDELLALFTPHLSSQA.

S-adenosyl-L-methionine contacts are provided by W10, K14, D54, and D181.

The protein belongs to the N(4)/N(6)-methyltransferase family.

It carries out the reaction a 2'-deoxyadenosine in DNA + S-adenosyl-L-methionine = an N(6)-methyl-2'-deoxyadenosine in DNA + S-adenosyl-L-homocysteine + H(+). Functionally, an alpha subtype methylase, recognizes the double-stranded sequence 5'-GATC-3' and methylates A-2. May be involved in methyl-directed DNA mismatch repair, initiation of chromosome replication and gene expression. In Vibrio cholerae serotype O1 (strain ATCC 39541 / Classical Ogawa 395 / O395), this protein is DNA adenine methylase.